Reading from the N-terminus, the 421-residue chain is Indole-3-pyruvate monooxygenase YUCCA8 (421 aa).

Gly30–Gly35 is an FAD binding site. Gly201 to Gly206 contacts NADP(+).

The protein belongs to the FMO family. Requires FAD as cofactor. As to expression, expressed in organs undergoing active growth and cell division.

The protein localises to the endoplasmic reticulum. The enzyme catalyses indole-3-pyruvate + NADPH + O2 + H(+) = (indol-3-yl)acetate + CO2 + NADP(+) + H2O. Functionally, involved in auxin biosynthesis. Converts the indole-3-pyruvic acid (IPA) produced by the TAA family to indole-3-acetic acid (IAA). Seems not able to use tryptamine (TAM) as substrate. Probably responsible for auxin biosynthesis in leaves and involved in the regulation of lateral leaf growth. Required for maintaining water homeostasis and an appropriate root to shoot ratio. Required for the inhibition of root growth by ethylene in etiolated seedlings. Functions downstream of the ethylene-response transcription factor EIL1. The sequence is that of Indole-3-pyruvate monooxygenase YUCCA8 from Oryza sativa subsp. indica (Rice).